Reading from the N-terminus, the 178-residue chain is 5,6,7,8-tetrahydromethanopterin hydro-lyase (178 aa).

His33 serves as the catalytic Proton donor. Asp35, Leu64, Lys82, Thr84, and Gln99 together coordinate substrate.

The protein belongs to the formaldehyde-activating enzyme family.

The protein localises to the cytoplasm. The catalysed reaction is 5,6,7,8-tetrahydromethanopterin + formaldehyde = 5,10-methylenetetrahydromethanopterin + H2O. Functionally, catalyzes the condensation of formaldehyde with tetrahydromethanopterin (H(4)MPT) to 5,10-methylenetetrahydromethanopterin. The sequence is that of 5,6,7,8-tetrahydromethanopterin hydro-lyase (faeA) from Methanosarcina barkeri (strain Fusaro / DSM 804).